We begin with the raw amino-acid sequence, 517 residues long: ATP synthase subunit alpha 1 (517 aa).

Position 174–181 (glycine 174–threonine 181) interacts with ATP.

The protein belongs to the ATPase alpha/beta chains family. As to quaternary structure, F-type ATPases have 2 components, CF(1) - the catalytic core - and CF(0) - the membrane proton channel. CF(1) has five subunits: alpha(3), beta(3), gamma(1), delta(1), epsilon(1). CF(0) has three main subunits: a(1), b(2) and c(9-12). The alpha and beta chains form an alternating ring which encloses part of the gamma chain. CF(1) is attached to CF(0) by a central stalk formed by the gamma and epsilon chains, while a peripheral stalk is formed by the delta and b chains.

Its subcellular location is the cell inner membrane. It catalyses the reaction ATP + H2O + 4 H(+)(in) = ADP + phosphate + 5 H(+)(out). In terms of biological role, produces ATP from ADP in the presence of a proton gradient across the membrane. The alpha chain is a regulatory subunit. In Albidiferax ferrireducens (strain ATCC BAA-621 / DSM 15236 / T118) (Rhodoferax ferrireducens), this protein is ATP synthase subunit alpha 1.